A 503-amino-acid chain; its full sequence is MVIGLSTMLEKTEALFASDHASVVSMNLFVALLCACIVLGHLLEETRWMNESITALIIGSCTGIVILLISGGKSSRILVFSEDLFFIYLLPPIIFNAGFQVKKKQFFRNFMTIMLFGAIGTLISFVIISFGAKHLFEKMNIGDLTIADYLAIGAIFSATDSVCTLQVLNQDETPLLYSLVFGEGVVNDATSVVLFNAIQRFDLTNINSAIALEFAGNFFYLFILSTALGVAAGLLSAFVIKKLYIGRHSTDREVALMMLLAYLSYMLAELFHLSSILTVFFCGIVMSHYTWHNVTDKSKVTTKHTFAAMSFLAEIFIFLYVGMDALDIEKWDVVRNSPGQSIGVSSILLGLILLGRAAFVFPLSFLSNLTKSSPDEKIDLKKQVTIWWAGLMRGAVSMALAYNQFTTSGHTKVLGNAIMITSTITVVLFSTVVFGLLTKPLVKHLQPSSKQSSTTALQITLRSSFHDPILHEPLLSTQGQSEYDPEQHVSFRMFWKSPSRFTH.

The Cytoplasmic portion of the chain corresponds to 1–22 (MVIGLSTMLEKTEALFASDHAS). The chain crosses the membrane as a helical span at residues 23-43 (VVSMNLFVALLCACIVLGHLL). At 44–51 (EETRWMNE) the chain is on the vacuolar side. The N-linked (GlcNAc...) asparagine glycan is linked to N50. The chain crosses the membrane as a helical span at residues 52-72 (SITALIIGSCTGIVILLISGG). Over 73–76 (KSSR) the chain is Cytoplasmic. Residues 77-97 (ILVFSEDLFFIYLLPPIIFNA) constitute an intramembrane region (helical). Over 98 to 109 (GFQVKKKQFFRN) the chain is Cytoplasmic. A helical transmembrane segment spans residues 110–130 (FMTIMLFGAIGTLISFVIISF). The Vacuolar segment spans residues 131–138 (GAKHLFEK). Residues 139–159 (MNIGDLTIADYLAIGAIFSAT) form a helical membrane-spanning segment. At 160–174 (DSVCTLQVLNQDETP) the chain is on the cytoplasmic side. The helical transmembrane segment at 175–195 (LLYSLVFGEGVVNDATSVVLF) threads the bilayer. Over 196–219 (NAIQRFDLTNINSAIALEFAGNFF) the chain is Vacuolar. The helical transmembrane segment at 220–240 (YLFILSTALGVAAGLLSAFVI) threads the bilayer. Residues 241 to 265 (KKLYIGRHSTDREVALMMLLAYLSY) are Cytoplasmic-facing. Residues 266-286 (MLAELFHLSSILTVFFCGIVM) traverse the membrane as a helical segment. The Vacuolar portion of the chain corresponds to 287–305 (SHYTWHNVTDKSKVTTKHT). The N-linked (GlcNAc...) asparagine glycan is linked to N293. The chain crosses the membrane as a helical span at residues 306-326 (FAAMSFLAEIFIFLYVGMDAL). Over 327–345 (DIEKWDVVRNSPGQSIGVS) the chain is Cytoplasmic. A helical membrane pass occupies residues 346-366 (SILLGLILLGRAAFVFPLSFL). At 367–383 (SNLTKSSPDEKIDLKKQ) the chain is on the vacuolar side. N-linked (GlcNAc...) asparagine glycosylation occurs at N368. Residues 384–406 (VTIWWAGLMRGAVSMALAYNQFT) form a helical membrane-spanning segment. Residues 407–416 (TSGHTKVLGN) lie on the Cytoplasmic side of the membrane. The helical transmembrane segment at 417–437 (AIMITSTITVVLFSTVVFGLL) threads the bilayer. Residues 438 to 503 (TKPLVKHLQP…FWKSPSRFTH (66 aa)) are Vacuolar-facing.

The protein belongs to the monovalent cation:proton antiporter 1 (CPA1) transporter (TC 2.A.36) family. As to expression, expressed in roots.

Its subcellular location is the vacuole membrane. The catalysed reaction is Na(+)(in) + H(+)(out) = Na(+)(out) + H(+)(in). It carries out the reaction K(+)(in) + H(+)(out) = K(+)(out) + H(+)(in). Functionally, may act in low affinity electroneutral exchange of protons for cations such as Na(+) or K(+) across membranes. May also exchange Li(+) and Cs(+) with a lower affinity. In Arabidopsis thaliana (Mouse-ear cress), this protein is Sodium/hydrogen exchanger 3 (NHX3).